A 298-amino-acid chain; its full sequence is ATP phosphoribosyltransferase (298 aa).

The protein belongs to the ATP phosphoribosyltransferase family. Long subfamily. Mg(2+) serves as cofactor.

Its subcellular location is the cytoplasm. It catalyses the reaction 1-(5-phospho-beta-D-ribosyl)-ATP + diphosphate = 5-phospho-alpha-D-ribose 1-diphosphate + ATP. Its pathway is amino-acid biosynthesis; L-histidine biosynthesis; L-histidine from 5-phospho-alpha-D-ribose 1-diphosphate: step 1/9. Its activity is regulated as follows. Feedback inhibited by histidine. Catalyzes the condensation of ATP and 5-phosphoribose 1-diphosphate to form N'-(5'-phosphoribosyl)-ATP (PR-ATP). Has a crucial role in the pathway because the rate of histidine biosynthesis seems to be controlled primarily by regulation of HisG enzymatic activity. The protein is ATP phosphoribosyltransferase of Psychromonas ingrahamii (strain DSM 17664 / CCUG 51855 / 37).